The primary structure comprises 488 residues: Protein nucleotidyltransferase YdiU (488 aa).

ATP contacts are provided by G90, G92, R93, K113, D125, G126, R176, and R183. Catalysis depends on D252, which acts as the Proton acceptor. Residues N253 and D262 each coordinate Mg(2+). D262 contributes to the ATP binding site.

This sequence belongs to the SELO family. Mg(2+) is required as a cofactor. It depends on Mn(2+) as a cofactor.

It catalyses the reaction L-seryl-[protein] + ATP = 3-O-(5'-adenylyl)-L-seryl-[protein] + diphosphate. The enzyme catalyses L-threonyl-[protein] + ATP = 3-O-(5'-adenylyl)-L-threonyl-[protein] + diphosphate. It carries out the reaction L-tyrosyl-[protein] + ATP = O-(5'-adenylyl)-L-tyrosyl-[protein] + diphosphate. The catalysed reaction is L-histidyl-[protein] + UTP = N(tele)-(5'-uridylyl)-L-histidyl-[protein] + diphosphate. It catalyses the reaction L-seryl-[protein] + UTP = O-(5'-uridylyl)-L-seryl-[protein] + diphosphate. The enzyme catalyses L-tyrosyl-[protein] + UTP = O-(5'-uridylyl)-L-tyrosyl-[protein] + diphosphate. Functionally, nucleotidyltransferase involved in the post-translational modification of proteins. It can catalyze the addition of adenosine monophosphate (AMP) or uridine monophosphate (UMP) to a protein, resulting in modifications known as AMPylation and UMPylation. This chain is Protein nucleotidyltransferase YdiU, found in Thiobacillus denitrificans (strain ATCC 25259 / T1).